A 481-amino-acid chain; its full sequence is Protein nucleotidyltransferase YdiU (481 aa).

The ATP site is built by G85, G87, R88, K108, D120, G121, R172, and R179. Residue D248 is the Proton acceptor of the active site. Mg(2+) is bound by residues N249 and D258. ATP is bound at residue D258.

Belongs to the SELO family. It depends on Mg(2+) as a cofactor. Mn(2+) is required as a cofactor.

The enzyme catalyses L-seryl-[protein] + ATP = 3-O-(5'-adenylyl)-L-seryl-[protein] + diphosphate. The catalysed reaction is L-threonyl-[protein] + ATP = 3-O-(5'-adenylyl)-L-threonyl-[protein] + diphosphate. It carries out the reaction L-tyrosyl-[protein] + ATP = O-(5'-adenylyl)-L-tyrosyl-[protein] + diphosphate. It catalyses the reaction L-histidyl-[protein] + UTP = N(tele)-(5'-uridylyl)-L-histidyl-[protein] + diphosphate. The enzyme catalyses L-seryl-[protein] + UTP = O-(5'-uridylyl)-L-seryl-[protein] + diphosphate. The catalysed reaction is L-tyrosyl-[protein] + UTP = O-(5'-uridylyl)-L-tyrosyl-[protein] + diphosphate. In terms of biological role, nucleotidyltransferase involved in the post-translational modification of proteins. It can catalyze the addition of adenosine monophosphate (AMP) or uridine monophosphate (UMP) to a protein, resulting in modifications known as AMPylation and UMPylation. This chain is Protein nucleotidyltransferase YdiU, found in Cereibacter sphaeroides (strain ATCC 17025 / ATH 2.4.3) (Rhodobacter sphaeroides).